A 753-amino-acid chain; its full sequence is Metal regulatory transcription factor 1 (753 aa).

An N-acetylglycine modification is found at glycine 2. Serine 5 is subject to Phosphoserine. The short motif at 133-138 is the Nuclear localization signal element; that stretch reads KRKEVK. 6 consecutive C2H2-type zinc fingers follow at residues 140-164, 170-194, 200-224, 229-253, 259-283, and 289-313; these read YQCT…QKTH, FVCN…VRVH, FECD…QRLH, FNCE…IRTH, FRCD…VRTH, and FFCP…MKGH. Serine 305 is subject to Phosphoserine. Disordered regions lie at residues 308-328, 395-466, and 648-715; these read SHMK…QHNG, ESFN…ALLQ, and SRRK…LSAM. Positions 408 to 417 are enriched in polar residues; it reads PPSTGNSASL. Positions 655–666 are enriched in pro residues; it reads SPPPPEPSPQAP. The span at 679–698 shows a compositional bias: low complexity; the sequence is SSAPVPGSSSSTLPSSCEQS. A compositionally biased stretch (polar residues) spans 700–712; sequence QAETPSDPQTETL.

The protein resides in the nucleus. The protein localises to the cytoplasm. Zinc-dependent transcriptional regulator of cellular adaption to conditions of exposure to heavy metals. Binds to metal responsive elements (MRE) in promoters and activates the transcription of metallothionein genes like metallothionein-2/MT2A. Also regulates the expression of metalloproteases in response to intracellular zinc and functions as a catabolic regulator of cartilages. The polypeptide is Metal regulatory transcription factor 1 (MTF1) (Homo sapiens (Human)).